Reading from the N-terminus, the 39-residue chain is Photosystem II reaction center protein L (39 aa).

The chain crosses the membrane as a helical span at residues 18-38 (SLYLGLLFVFVTGVLMSSYFF).

It belongs to the PsbL family. PSII is composed of 1 copy each of membrane proteins PsbA, PsbB, PsbC, PsbD, PsbE, PsbF, PsbH, PsbI, PsbJ, PsbK, PsbL, PsbM, PsbT, PsbX, PsbY, PsbZ, Psb30/Ycf12, peripheral proteins PsbO, CyanoQ (PsbQ), PsbU, PsbV and a large number of cofactors. It forms dimeric complexes.

Its subcellular location is the cellular thylakoid membrane. One of the components of the core complex of photosystem II (PSII). PSII is a light-driven water:plastoquinone oxidoreductase that uses light energy to abstract electrons from H(2)O, generating O(2) and a proton gradient subsequently used for ATP formation. It consists of a core antenna complex that captures photons, and an electron transfer chain that converts photonic excitation into a charge separation. This subunit is found at the monomer-monomer interface and is required for correct PSII assembly and/or dimerization. The polypeptide is Photosystem II reaction center protein L (Synechococcus sp. (strain CC9605)).